The following is a 541-amino-acid chain: GMP synthase [glutamine-hydrolyzing] (541 aa).

Positions 15-209 (TILTLDFGSQ…AVNICGCKQN (195 aa)) constitute a Glutamine amidotransferase type-1 domain. Cys91 functions as the Nucleophile in the catalytic mechanism. Catalysis depends on residues His183 and Glu185. In terms of domain architecture, GMPS ATP-PPase spans 210 to 416 (WTMARFVDQE…LGIAHEMVMR (207 aa)). 238-244 (SGGVDST) provides a ligand contact to ATP. XMP is bound by residues Arg311, Asp478, Lys533, and Glu539.

Homodimer. Requires Mg(2+) as cofactor.

It is found in the cytoplasm. The protein localises to the cytosol. It catalyses the reaction XMP + L-glutamine + ATP + H2O = GMP + L-glutamate + AMP + diphosphate + 2 H(+). The protein operates within purine metabolism; GMP biosynthesis; GMP from XMP (L-Gln route): step 1/1. Catalyzes the conversion of xanthine monophosphate (XMP) to GMP in the presence of glutamine and ATP through an adenyl-XMP intermediate. The polypeptide is GMP synthase [glutamine-hydrolyzing] (gua1) (Aspergillus oryzae (strain ATCC 42149 / RIB 40) (Yellow koji mold)).